We begin with the raw amino-acid sequence, 552 residues long: Hyaluronan synthase 2 (552 aa).

Topologically, residues 1–11 (MHCERFLCVLR) are cytoplasmic. Residues 12 to 32 (IIGTTLFGVSLLLGITAAYIV) form a helical membrane-spanning segment. The Extracellular segment spans residues 33 to 45 (GYQFIQTDNYYFS). A helical transmembrane segment spans residues 46 to 66 (FGLYGAFLASHLIIQSLFAFL). Topologically, residues 67 to 374 (EHRKMKKSLE…NAMWFHKHHL (308 aa)) are cytoplasmic. Residue T110 is modified to Phosphothreonine. A Glycyl lysine isopeptide (Lys-Gly) (interchain with G-Cter in ubiquitin) cross-link involves residue K190. S221 carries an O-linked (GlcNAc) serine glycan. T328 is modified (phosphothreonine). The chain crosses the membrane as a helical span at residues 375-395 (WMTYEAVITGFFPFFLIATVI). The Extracellular portion of the chain corresponds to 396–402 (QLFYRGK). A helical membrane pass occupies residues 403-423 (IWNILLFLLTVQLVGLIKSSF). Topologically, residues 424 to 429 (ASCLRG) are cytoplasmic. A helical transmembrane segment spans residues 430-450 (NIVMVFMSLYSVLYMSSLLPA). Topologically, residues 451–475 (KMFAIATINKAGWGTSGRKTIVVNF) are extracellular. The chain crosses the membrane as a helical span at residues 476-496 (IGLIPVSVWFTILLGGVIFTI). Topologically, residues 497–510 (YKESKKPFSESKQT) are cytoplasmic. Residues 511–531 (VLIVGTLIYACYWVMLLTLYV) form a helical membrane-spanning segment. At 532-552 (VLINKCGRRKKGQQYDMVLDV) the chain is on the extracellular side.

The protein belongs to the NodC/HAS family. As to quaternary structure, homodimer; dimerization promotes enzymatic activity. Forms heterodimer with HAS3. Forms heterodimer with HAS1. The cofactor is Mg(2+). In terms of processing, phosphorylation at Thr-328 is essential for hyaluronan synthase activity. O-GlcNAcylation at Ser-221 increases the stability of HAS2 and plasma membrane localization. Post-translationally, ubiquitination at Lys-190; this ubiquitination is essential for hyaluronan synthase activity and homo- or hetero-oligomerization. Can also be poly-ubiquitinated. Deubiquitinated by USP17L22/USP17 and USP4. USP17L22/USP17 efficiently removes 'Lys-63'- and 'Lys-48'-linked polyubiquitin chains, whereas USP4 preferentially removes monoubiquitination and, partially, both 'Lys-63'- and 'Lys-48'-linked polyubiquitin chain. As to expression, expressed in heart, brain, spleen, lung and skeletal muscle.

Its subcellular location is the cell membrane. It is found in the endoplasmic reticulum membrane. The protein localises to the vesicle. It localises to the golgi apparatus membrane. The protein resides in the lysosome. It catalyses the reaction [hyaluronan](n) + UDP-N-acetyl-alpha-D-glucosamine = N-acetyl-beta-D-glucosaminyl-(1-&gt;4)-[hyaluronan](n) + UDP + H(+). The enzyme catalyses N-acetyl-beta-D-glucosaminyl-(1-&gt;4)-[hyaluronan](n) + UDP-alpha-D-glucuronate = [hyaluronan](n+1) + UDP + H(+). The protein operates within glycan biosynthesis; hyaluronan biosynthesis. In terms of biological role, catalyzes the addition of GlcNAc or GlcUA monosaccharides to the nascent hyaluronan polymer. Therefore, it is essential to hyaluronan synthesis a major component of most extracellular matrices that has a structural role in tissues architectures and regulates cell adhesion, migration and differentiation. This is one of the isozymes catalyzing that reaction and it is particularly responsible for the synthesis of high molecular mass hyaluronan. Required for the transition of endocardial cushion cells into mesenchymal cells, a process crucial for heart development. May also play a role in vasculogenesis. High molecular mass hyaluronan also play a role in early contact inhibition a process which stops cell growth when cells come into contact with each other or the extracellular matrix. Catalyzes the addition of GlcNAc or GlcUA monosaccharides to the nascent hyaluronan polymer. Therefore, it is essential to hyaluronan synthesis a major component of most extracellular matrices that has a structural role in tissues architectures and regulates cell adhesion, migration and differentiation. This is one of three isoenzymes responsible for cellular hyaluronan synthesis and it is particularly responsible for the synthesis of high molecular mass hyaluronan. This chain is Hyaluronan synthase 2, found in Mus musculus (Mouse).